A 410-amino-acid chain; its full sequence is Multifunctional CCA protein (410 aa).

The ATP site is built by Gly8 and Arg11. 2 residues coordinate CTP: Gly8 and Arg11. Asp21 and Asp23 together coordinate Mg(2+). Residues Arg91, Arg137, and Arg140 each coordinate ATP. Arg91, Arg137, and Arg140 together coordinate CTP. Positions 228-329 constitute an HD domain; sequence TGVHVLSVLQ…LELLQSFDVY (102 aa).

It belongs to the tRNA nucleotidyltransferase/poly(A) polymerase family. Bacterial CCA-adding enzyme type 1 subfamily. As to quaternary structure, monomer. Can also form homodimers and oligomers. Mg(2+) serves as cofactor. Requires Ni(2+) as cofactor.

The enzyme catalyses a tRNA precursor + 2 CTP + ATP = a tRNA with a 3' CCA end + 3 diphosphate. The catalysed reaction is a tRNA with a 3' CCA end + 2 CTP + ATP = a tRNA with a 3' CCACCA end + 3 diphosphate. Catalyzes the addition and repair of the essential 3'-terminal CCA sequence in tRNAs without using a nucleic acid template. Adds these three nucleotides in the order of C, C, and A to the tRNA nucleotide-73, using CTP and ATP as substrates and producing inorganic pyrophosphate. tRNA 3'-terminal CCA addition is required both for tRNA processing and repair. Also involved in tRNA surveillance by mediating tandem CCA addition to generate a CCACCA at the 3' terminus of unstable tRNAs. While stable tRNAs receive only 3'-terminal CCA, unstable tRNAs are marked with CCACCA and rapidly degraded. The polypeptide is Multifunctional CCA protein (Pseudomonas aeruginosa (strain LESB58)).